The primary structure comprises 617 residues: Putative metal ion transporter C17A12.14 (617 aa).

The interval 1-141 (MPSNTSRSVP…GKNTRDQPSP (141 aa)) is disordered. At S105 the chain carries Phosphoserine. Positions 117-136 (SHPEDIQRKEFETENGKNTR) are enriched in basic and acidic residues. Residues S152, S162, S226, and S241 each carry the phosphoserine modification. 2 consecutive transmembrane segments (helical) span residues 560-580 (TILG…GMNV) and 590-610 (LGWF…SFIL).

Belongs to the CorA metal ion transporter (MIT) (TC 1.A.35) family. As to quaternary structure, interacts with sad1.

The protein localises to the membrane. The chain is Putative metal ion transporter C17A12.14 from Schizosaccharomyces pombe (strain 972 / ATCC 24843) (Fission yeast).